The primary structure comprises 299 residues: uncharacterized protein (299 aa).

This is an uncharacterized protein from Escherichia coli (strain K12).